Reading from the N-terminus, the 823-residue chain is Adhesion G protein-coupled receptor E2 (823 aa).

Positions methionine 1–threonine 23 are cleaved as a signal peptide. At glutamine 24–threonine 540 the chain is on the extracellular side. The 42-residue stretch at aspartate 25–aspartate 66 folds into the EGF-like 1 domain. Cystine bridges form between cysteine 29-cysteine 39, cysteine 33-cysteine 45, cysteine 47-cysteine 65, cysteine 71-cysteine 85, cysteine 79-cysteine 94, cysteine 96-cysteine 117, cysteine 123-cysteine 136, cysteine 130-cysteine 145, cysteine 147-cysteine 161, cysteine 167-cysteine 180, cysteine 174-cysteine 189, cysteine 191-cysteine 210, cysteine 216-cysteine 229, cysteine 223-cysteine 238, and cysteine 240-cysteine 259. Residue asparagine 41 is glycosylated (N-linked (GlcNAc...) asparagine). One can recognise an EGF-like 2; calcium-binding domain in the interval aspartate 67 to glutamine 118. Residue asparagine 111 is glycosylated (N-linked (GlcNAc...) asparagine). Positions aspartate 119–threonine 162 constitute an EGF-like 3; calcium-binding domain. In terms of domain architecture, EGF-like 4; calcium-binding spans aspartate 163 to glutamate 211. N-linked (GlcNAc...) asparagine glycosylation occurs at asparagine 206. One can recognise an EGF-like 5; calcium-binding domain in the interval aspartate 212–glutamate 260. 5 N-linked (GlcNAc...) asparagine glycosylation sites follow: asparagine 298, asparagine 347, asparagine 354, asparagine 456, and asparagine 460. The 177-residue stretch at asparagine 354–glutamine 530 folds into the GAIN-B domain. Disulfide bonds link cysteine 482/cysteine 512 and cysteine 500/cysteine 514. The interval cysteine 482 to glutamine 530 is GPS. A helical membrane pass occupies residues tyrosine 541–cysteine 561. At lysine 562–threonine 569 the chain is on the cytoplasmic side. A helical transmembrane segment spans residues serine 570–isoleucine 590. The Extracellular portion of the chain corresponds to aspartate 591 to threonine 605. A helical transmembrane segment spans residues leucine 606–leucine 626. Residues threonine 627–lysine 644 are Cytoplasmic-facing. A helical transmembrane segment spans residues lysine 645–serine 665. Residues arginine 666–glycine 683 are Extracellular-facing. A helical transmembrane segment spans residues phenylalanine 684–leucine 704. The Cytoplasmic segment spans residues valine 705–threonine 735. A helical transmembrane segment spans residues alanine 736–alanine 756. The Extracellular portion of the chain corresponds to arginine 757 to alanine 760. The chain crosses the membrane as a helical span at residues tyrosine 761–leucine 781. Over serine 782 to asparagine 823 the chain is Cytoplasmic.

Belongs to the G-protein coupled receptor 2 family. Adhesion G-protein coupled receptor (ADGR) subfamily. In terms of assembly, forms a heterodimer, consisting of a large extracellular region non-covalently linked to a seven-transmembrane moiety. Interacts with chondroitin sulfate; the interaction with chondroitin sulfate is calcium-dependent. Interacts with CD55. Autoproteolytically cleaved into 2 subunits, an extracellular alpha subunit and a seven-transmembrane beta subunit. As to expression, expression is restricted to myeloid cells. Highest expression was found in peripheral blood leukocytes, followed by spleen and lymph nodes, with intermediate to low levels in thymus, bone marrow, fetal liver, placenta, and lung, and no expression in heart, brain, skeletal muscle, kidney, or pancreas. Expression is also detected in monocyte/macrophage and Jurkat cell lines but not in other cell lines tested. High expression in mast cells.

It localises to the cell membrane. Its subcellular location is the cell projection. The protein resides in the ruffle membrane. In terms of biological role, cell surface receptor that binds to the chondroitin sulfate moiety of glycosaminoglycan chains and promotes cell attachment. Promotes granulocyte chemotaxis, degranulation and adhesion. In macrophages, promotes the release of inflammatory cytokines, including IL8 and TNF. Signals probably through G-proteins. Is a regulator of mast cell degranulation. This Homo sapiens (Human) protein is Adhesion G protein-coupled receptor E2.